The chain runs to 169 residues: Crossover junction endodeoxyribonuclease RuvC (169 aa).

Catalysis depends on residues Asp-15, Glu-75, and Asp-147. 3 residues coordinate Mg(2+): Asp-15, Glu-75, and Asp-147.

It belongs to the RuvC family. Homodimer which binds Holliday junction (HJ) DNA. The HJ becomes 2-fold symmetrical on binding to RuvC with unstacked arms; it has a different conformation from HJ DNA in complex with RuvA. In the full resolvosome a probable DNA-RuvA(4)-RuvB(12)-RuvC(2) complex forms which resolves the HJ. Mg(2+) is required as a cofactor.

It localises to the cytoplasm. The catalysed reaction is Endonucleolytic cleavage at a junction such as a reciprocal single-stranded crossover between two homologous DNA duplexes (Holliday junction).. The RuvA-RuvB-RuvC complex processes Holliday junction (HJ) DNA during genetic recombination and DNA repair. Endonuclease that resolves HJ intermediates. Cleaves cruciform DNA by making single-stranded nicks across the HJ at symmetrical positions within the homologous arms, yielding a 5'-phosphate and a 3'-hydroxyl group; requires a central core of homology in the junction. The consensus cleavage sequence is 5'-(A/T)TT(C/G)-3'. Cleavage occurs on the 3'-side of the TT dinucleotide at the point of strand exchange. HJ branch migration catalyzed by RuvA-RuvB allows RuvC to scan DNA until it finds its consensus sequence, where it cleaves and resolves the cruciform DNA. This chain is Crossover junction endodeoxyribonuclease RuvC, found in Caulobacter vibrioides (strain ATCC 19089 / CIP 103742 / CB 15) (Caulobacter crescentus).